The sequence spans 190 residues: Succinate dehydrogenase assembly factor 2, mitochondrial (190 aa).

It belongs to the SDHAF2 family. Interacts with the flavoprotein subunit within the SDH catalytic dimer.

The protein localises to the mitochondrion matrix. Functionally, plays an essential role in the assembly of succinate dehydrogenase (SDH), an enzyme complex (also referred to as respiratory complex II) that is a component of both the tricarboxylic acid (TCA) cycle and the mitochondrial electron transport chain, and which couples the oxidation of succinate to fumarate with the reduction of ubiquinone (coenzyme Q) to ubiquinol. Required for flavinylation (covalent attachment of FAD) of the flavoprotein subunit of the SDH catalytic dimer. In Komagataella phaffii (strain GS115 / ATCC 20864) (Yeast), this protein is Succinate dehydrogenase assembly factor 2, mitochondrial.